A 186-amino-acid polypeptide reads, in one-letter code: Signal peptidase complex catalytic subunit SEC11 (186 aa).

Over 1-20 (MDALGLSKLRHLKPRQLLSQ) the chain is Cytoplasmic. The chain crosses the membrane as a helical; Signal-anchor for type II membrane protein span at residues 21-41 (VLNFALILSTAFMLWKGLSVA). Residues 42–186 (TDSPSPIVVV…MGLLVIVQRE (145 aa)) lie on the Lumenal side of the membrane. Residues serine 55, histidine 102, and aspartate 128 each act as charge relay system in the active site. The interval 172-183 (ALLGIMGLLVIV) is C-terminal short (CTS) helix.

Belongs to the peptidase S26B family. In terms of assembly, component of the signal peptidase complex (SPC) composed of a catalytic subunit SEC11 and three accessory subunits SPC1, SPC2 and SPC3. The complex induces a local thinning of the ER membrane which is used to measure the length of the signal peptide (SP) h-region of protein substrates. This ensures the selectivity of the complex towards h-regions shorter than 18-20 amino acids. SPC associates with the translocon complex.

The protein resides in the endoplasmic reticulum membrane. The enzyme catalyses Cleavage of hydrophobic, N-terminal signal or leader sequences from secreted and periplasmic proteins.. Its function is as follows. Catalytic component of the signal peptidase complex (SPC) which catalyzes the cleavage of N-terminal signal sequences from nascent proteins as they are translocated into the lumen of the endoplasmic reticulum. Specifically cleaves N-terminal signal peptides that contain a hydrophobic alpha-helix (h-region) shorter than 18-20 amino acids. This chain is Signal peptidase complex catalytic subunit SEC11 (SEC11), found in Tuber melanosporum (strain Mel28) (Perigord black truffle).